Here is a 375-residue protein sequence, read N- to C-terminus: Queuine tRNA-ribosyltransferase (375 aa).

The active-site Proton acceptor is Asp-89. Substrate is bound by residues 89 to 93, Asp-143, Gln-187, and Gly-214; that span reads DSGGF. Positions 245–251 are RNA binding; that stretch reads GVGKPED. Residue Asp-264 is the Nucleophile of the active site. The segment at 269-273 is RNA binding; important for wobble base 34 recognition; the sequence is TRNAR. Positions 302, 304, 307, and 333 each coordinate Zn(2+).

This sequence belongs to the queuine tRNA-ribosyltransferase family. Homodimer. Within each dimer, one monomer is responsible for RNA recognition and catalysis, while the other monomer binds to the replacement base PreQ1. The cofactor is Zn(2+).

The catalysed reaction is 7-aminomethyl-7-carbaguanine + guanosine(34) in tRNA = 7-aminomethyl-7-carbaguanosine(34) in tRNA + guanine. Its pathway is tRNA modification; tRNA-queuosine biosynthesis. Its function is as follows. Catalyzes the base-exchange of a guanine (G) residue with the queuine precursor 7-aminomethyl-7-deazaguanine (PreQ1) at position 34 (anticodon wobble position) in tRNAs with GU(N) anticodons (tRNA-Asp, -Asn, -His and -Tyr). Catalysis occurs through a double-displacement mechanism. The nucleophile active site attacks the C1' of nucleotide 34 to detach the guanine base from the RNA, forming a covalent enzyme-RNA intermediate. The proton acceptor active site deprotonates the incoming PreQ1, allowing a nucleophilic attack on the C1' of the ribose to form the product. After dissociation, two additional enzymatic reactions on the tRNA convert PreQ1 to queuine (Q), resulting in the hypermodified nucleoside queuosine (7-(((4,5-cis-dihydroxy-2-cyclopenten-1-yl)amino)methyl)-7-deazaguanosine). This is Queuine tRNA-ribosyltransferase from Aliivibrio salmonicida (strain LFI1238) (Vibrio salmonicida (strain LFI1238)).